Consider the following 401-residue polypeptide: NALCN channel auxiliary factor 2 (401 aa).

Residues 42–62 (LASLLFFTALLSDHLWLCAGG) form a helical membrane-spanning segment. N-linked (GlcNAc...) asparagine glycans are attached at residues Asn-77, Asn-97, Asn-153, and Asn-178. A helical transmembrane segment spans residues 362 to 382 (LCVLVLFLLHTFISITTLQHC).

Belongs to the NALF family.

It is found in the membrane. Functionally, probable component of the NALCN channel complex, a channel that regulates the resting membrane potential and controls neuronal excitability. This chain is NALCN channel auxiliary factor 2 (nalf2), found in Danio rerio (Zebrafish).